We begin with the raw amino-acid sequence, 90 residues long: Probable Fe(2+)-trafficking protein (90 aa).

Belongs to the Fe(2+)-trafficking protein family.

Functionally, could be a mediator in iron transactions between iron acquisition and iron-requiring processes, such as synthesis and/or repair of Fe-S clusters in biosynthetic enzymes. The polypeptide is Probable Fe(2+)-trafficking protein (Pseudomonas syringae pv. tomato (strain ATCC BAA-871 / DC3000)).